The sequence spans 657 residues: UvrABC system protein B (657 aa).

The Helicase ATP-binding domain maps to Lys-25 to Arg-182. An ATP-binding site is contributed by Gly-38–Thr-45. The Beta-hairpin signature appears at Tyr-91–Ile-114. A Helicase C-terminal domain is found at Gln-429 to Ile-595. Residues Lys-621–Lys-656 form the UVR domain.

The protein belongs to the UvrB family. Forms a heterotetramer with UvrA during the search for lesions. Interacts with UvrC in an incision complex.

The protein resides in the cytoplasm. Functionally, the UvrABC repair system catalyzes the recognition and processing of DNA lesions. A damage recognition complex composed of 2 UvrA and 2 UvrB subunits scans DNA for abnormalities. Upon binding of the UvrA(2)B(2) complex to a putative damaged site, the DNA wraps around one UvrB monomer. DNA wrap is dependent on ATP binding by UvrB and probably causes local melting of the DNA helix, facilitating insertion of UvrB beta-hairpin between the DNA strands. Then UvrB probes one DNA strand for the presence of a lesion. If a lesion is found the UvrA subunits dissociate and the UvrB-DNA preincision complex is formed. This complex is subsequently bound by UvrC and the second UvrB is released. If no lesion is found, the DNA wraps around the other UvrB subunit that will check the other stand for damage. This chain is UvrABC system protein B, found in Clostridium botulinum (strain Alaska E43 / Type E3).